The primary structure comprises 209 residues: MALLAEHLLKPLPADRQIETGPFLEAVAHLPPFFDCLGSPVFTPIKADISGNITKIKAVYDTDPAKFKTLQNILEVEKGMYGAEWPKVGATLALLWLKRGLRFIQVFLQSICDGERDENHPNLIRVNANKAYEMALKKYHGWLVQKIFKAALYAAPYKSDFLKALSKGQNVTEEECLEKIRLFLVNYTATIDAIYDMYTKMNAELDYTV.

Residue Ala2 is modified to N-acetylalanine. 2 tandem repeats follow at residues 45–55 (IKADISGNITK) and 56–66 (IKAVYDTDPAK). Residues 45-66 (IKADISGNITKIKAVYDTDPAK) form a 2 X 12 AA approximate tandem repeats region. 48 to 55 (DISGNITK) contributes to the beta-D-galactosyl-(1-&gt;4)-beta-D-glucosyl-(1&lt;-&gt;1)-N-[(9Z)-octadecenoyl]-sphing-4-enine binding site. His140 and Tyr207 together coordinate beta-D-galactosyl-(1-&gt;4)-beta-D-glucosyl-(1&lt;-&gt;1)-N-[(9Z)-octadecenoyl]-sphing-4-enine.

It belongs to the GLTP family. Monomer.

Its subcellular location is the cytoplasm. Accelerates the intermembrane transfer of various glycolipids. Catalyzes the transfer of various glycosphingolipids between membranes but does not catalyze the transfer of phospholipids. May be involved in the intracellular translocation of glucosylceramides. This Mus musculus (Mouse) protein is Glycolipid transfer protein (Gltp).